We begin with the raw amino-acid sequence, 206 residues long: Urease accessory protein UreG (206 aa).

12–19 (GPVGSGKT) is a GTP binding site.

It belongs to the SIMIBI class G3E GTPase family. UreG subfamily. Homodimer. UreD, UreF and UreG form a complex that acts as a GTP-hydrolysis-dependent molecular chaperone, activating the urease apoprotein by helping to assemble the nickel containing metallocenter of UreC. The UreE protein probably delivers the nickel.

It is found in the cytoplasm. Functionally, facilitates the functional incorporation of the urease nickel metallocenter. This process requires GTP hydrolysis, probably effectuated by UreG. This chain is Urease accessory protein UreG, found in Synechocystis sp. (strain ATCC 27184 / PCC 6803 / Kazusa).